Consider the following 476-residue polypeptide: GTPase Der (476 aa).

EngA-type G domains are found at residues 3-167 and 205-380; these read FTVA…GEDM and LRVA…KTWN. Residues 9 to 16, 56 to 60, 119 to 122, 211 to 218, 258 to 262, and 323 to 326 each bind GTP; these read GRPNVGKS, DTAGL, NKSE, GRPNAGKS, DTAGM, and NKWD. In terms of domain architecture, KH-like spans 381–465; it reads RRISTAKLNR…PIRVHYRGSD (85 aa).

Belongs to the TRAFAC class TrmE-Era-EngA-EngB-Septin-like GTPase superfamily. EngA (Der) GTPase family. In terms of assembly, associates with the 50S ribosomal subunit.

Its function is as follows. GTPase that plays an essential role in the late steps of ribosome biogenesis. The sequence is that of GTPase Der from Agrobacterium fabrum (strain C58 / ATCC 33970) (Agrobacterium tumefaciens (strain C58)).